Consider the following 221-residue polypeptide: Iron-sulfur cluster assembly SufBD family protein ycf24 (221 aa).

This sequence belongs to the iron-sulfur cluster assembly SufBD family.

The protein resides in the plastid. Its subcellular location is the chloroplast. The chain is Iron-sulfur cluster assembly SufBD family protein ycf24 (ycf24) from Galdieria sulphuraria (Red alga).